Reading from the N-terminus, the 399-residue chain is Dof zinc finger protein DOF5.1 (399 aa).

The Dof-type zinc finger occupies 95-149 (LKCPRCDSTNTKFCYFNNYSLTQPRHFCKACRRYWTRGGALRSVPVGGGCRRNKR). Zn(2+) contacts are provided by cysteine 97, cysteine 100, cysteine 122, and cysteine 125. Residues 139–176 (PVGGGCRRNKRTKNSSGGGGGSTSSGNSKSQDSATSND) form a disordered region.

As to expression, expressed ubiquitously, especially in the vascular tissues, except in seeds, petals and anthers. Specific to the vascular tissues in young leaves, cotyledons and flower buds. The PEAR proteins (e.g. DOF2.4, DOF5.1, DOF3.2, DOF1.1, DOF5.6 and DOF5.3) form a short-range concentration gradient that peaks at protophloem sieve elements (PSE).

The protein resides in the nucleus. Transcription factor that binds specifically to a 5'-AA[AG]G-3' consensus core sequence. Binds to 5'-TAAAGT-3' motif in REV promoter to triggers its transcription, thus regulating adaxial-abaxial polarity and influencing leaf axial patterning in an auxin transport- and response-dependent manner (e.g. IAA6 and IAA19 genes expression). Probably involved in early processes for vascular development. The PEAR proteins (e.g. DOF2.4, DOF5.1, DOF3.2, DOF1.1, DOF5.6 and DOF5.3) activate gene expression that promotes radial growth of protophloem sieve elements. The protein is Dof zinc finger protein DOF5.1 of Arabidopsis thaliana (Mouse-ear cress).